The sequence spans 238 residues: Ribitol-5-phosphate cytidylyltransferase 1 (238 aa).

CTP-binding positions include 7 to 10 (LAGG) and 81 to 87 (GSDRNDT).

It belongs to the IspD/TarI cytidylyltransferase family. TarI subfamily.

The enzyme catalyses D-ribitol 5-phosphate + CTP + H(+) = CDP-L-ribitol + diphosphate. It functions in the pathway cell wall biogenesis; poly(ribitol phosphate) teichoic acid biosynthesis. Its function is as follows. Catalyzes the transfer of the cytidylyl group of CTP to D-ribitol 5-phosphate. The chain is Ribitol-5-phosphate cytidylyltransferase 1 from Staphylococcus aureus (strain USA300).